The chain runs to 356 residues: MRVEVLDNKRRIVRLRPESEEDLWLLRITLRPGDVVRIRTSRDVPVGSGRKERVVMTLRIRLDSIEFQPFTGKLRISGIVVEGPDEFGVKGRRHSTAVSIGTWLVVERDKGWSEQELERLASGRARGTAVIAAVDYDEFALAVLAGHGMKILEDTSARLPGKDDPSREQEVEKYVDRAAKRIVEEAARHRSPIAVIAGPGQLKTSVAEKVQRAMPSLKVATVDTSMGGVAGVREALRRESVTRILRELSIVEAEGVLEEFLRRIAKSRDTVAYTPGEVLAVARMGAVDTVLLVDTLLHSPDDAVREAVDEALRLVESMGGRVIIIPGDSPAGERLVSFGGVIALLRYPVPQEARRL.

The protein belongs to the eukaryotic release factor 1 family. Pelota subfamily. In terms of assembly, monomer. A divalent metal cation serves as cofactor.

It is found in the cytoplasm. May function in recognizing stalled ribosomes, interact with stem-loop structures in stalled mRNA molecules, and effect endonucleolytic cleavage of the mRNA. May play a role in the release non-functional ribosomes and degradation of damaged mRNAs. Has endoribonuclease activity. The protein is Protein pelota homolog of Aeropyrum pernix (strain ATCC 700893 / DSM 11879 / JCM 9820 / NBRC 100138 / K1).